A 398-amino-acid chain; its full sequence is NADH-quinone oxidoreductase subunit D (398 aa).

This sequence belongs to the complex I 49 kDa subunit family. NDH-1 is composed of 14 different subunits. Subunits NuoB, C, D, E, F, and G constitute the peripheral sector of the complex.

Its subcellular location is the cell inner membrane. The catalysed reaction is a quinone + NADH + 5 H(+)(in) = a quinol + NAD(+) + 4 H(+)(out). NDH-1 shuttles electrons from NADH, via FMN and iron-sulfur (Fe-S) centers, to quinones in the respiratory chain. The immediate electron acceptor for the enzyme in this species is believed to be ubiquinone. Couples the redox reaction to proton translocation (for every two electrons transferred, four hydrogen ions are translocated across the cytoplasmic membrane), and thus conserves the redox energy in a proton gradient. In Caulobacter vibrioides (strain ATCC 19089 / CIP 103742 / CB 15) (Caulobacter crescentus), this protein is NADH-quinone oxidoreductase subunit D.